The chain runs to 1196 residues: Cingulin (1196 aa).

The tract at residues Met-7–Gly-354 is head. The ZIM motif lies at Ala-48–Gly-62. The segment at Ala-54–Val-67 is interaction with TJP1/ZO1. Residues Ile-82–Tyr-105 form a disordered region. Ser-95, Ser-96, Ser-98, Ser-135, Ser-137, Ser-140, Ser-155, Ser-165, and Ser-214 each carry phosphoserine. Residues Ser-95–Tyr-105 show a composition bias toward polar residues. Positions Asn-183–Cys-263 are disordered. The segment covering Arg-218–Phe-231 has biased composition (basic and acidic residues). A compositionally biased stretch (polar residues) spans Met-245 to Gly-256. The residue at position 274 (Ser-274) is a Phosphoserine. Residues Leu-355–Ser-1150 are a coiled coil. Lys-576 carries the post-translational modification N6-acetyllysine. Positions Ala-884 to Lys-897 are enriched in basic and acidic residues. 3 disordered regions span residues Ala-884–Gln-906, Asp-1023–Glu-1061, and Asp-1149–Asp-1174. Residues Ser-1038–Glu-1050 are compositionally biased toward low complexity. Positions Leu-1051–Glu-1061 are enriched in basic and acidic residues. The segment at Ser-1155–Cys-1196 is tail. A phosphoserine mark is found at Ser-1168, Ser-1169, and Ser-1175.

This sequence belongs to the cingulin family. As to quaternary structure, homodimer. Interacts with TJP1/ZO1 and SPEF1.

The protein localises to the cell junction. It localises to the tight junction. Its function is as follows. Probably plays a role in the formation and regulation of the tight junction (TJ) paracellular permeability barrier. This is Cingulin from Canis lupus familiaris (Dog).